The chain runs to 158 residues: PRA1 family protein 2 (158 aa).

A run of 4 helical transmembrane segments spans residues 36-58 (NLNF…TLFT), 62-79 (LLVA…LFFV), 88-108 (FAVL…VIVI), and 113-133 (GLTL…HSAL).

It belongs to the PRA1 family.

The protein resides in the membrane. May act as a general Rab protein regulator. The polypeptide is PRA1 family protein 2 (prafB) (Dictyostelium discoideum (Social amoeba)).